A 103-amino-acid chain; its full sequence is Small ribosomal subunit protein uS10 (103 aa).

The protein belongs to the universal ribosomal protein uS10 family. As to quaternary structure, part of the 30S ribosomal subunit.

In terms of biological role, involved in the binding of tRNA to the ribosomes. In Natranaerobius thermophilus (strain ATCC BAA-1301 / DSM 18059 / JW/NM-WN-LF), this protein is Small ribosomal subunit protein uS10.